We begin with the raw amino-acid sequence, 228 residues long: Phosphoribosylformylglycinamidine synthase subunit PurQ (228 aa).

The region spanning 2 to 225 (KAAVISFPGS…INQTEGADVR (224 aa)) is the Glutamine amidotransferase type-1 domain. The Nucleophile role is filled by C86. Residues H194 and E196 contribute to the active site.

In terms of assembly, part of the FGAM synthase complex composed of 1 PurL, 1 PurQ and 2 PurS subunits.

The protein resides in the cytoplasm. It carries out the reaction N(2)-formyl-N(1)-(5-phospho-beta-D-ribosyl)glycinamide + L-glutamine + ATP + H2O = 2-formamido-N(1)-(5-O-phospho-beta-D-ribosyl)acetamidine + L-glutamate + ADP + phosphate + H(+). The catalysed reaction is L-glutamine + H2O = L-glutamate + NH4(+). It participates in purine metabolism; IMP biosynthesis via de novo pathway; 5-amino-1-(5-phospho-D-ribosyl)imidazole from N(2)-formyl-N(1)-(5-phospho-D-ribosyl)glycinamide: step 1/2. Functionally, part of the phosphoribosylformylglycinamidine synthase complex involved in the purines biosynthetic pathway. Catalyzes the ATP-dependent conversion of formylglycinamide ribonucleotide (FGAR) and glutamine to yield formylglycinamidine ribonucleotide (FGAM) and glutamate. The FGAM synthase complex is composed of three subunits. PurQ produces an ammonia molecule by converting glutamine to glutamate. PurL transfers the ammonia molecule to FGAR to form FGAM in an ATP-dependent manner. PurS interacts with PurQ and PurL and is thought to assist in the transfer of the ammonia molecule from PurQ to PurL. This Lacticaseibacillus paracasei (strain ATCC 334 / BCRC 17002 / CCUG 31169 / CIP 107868 / KCTC 3260 / NRRL B-441) (Lactobacillus paracasei) protein is Phosphoribosylformylglycinamidine synthase subunit PurQ.